Reading from the N-terminus, the 976-residue chain is R3H domain-containing protein 2 (976 aa).

Disordered regions lie at residues 32–71 (ISKT…AKSN) and 105–147 (ISCP…QEYT). A compositionally biased stretch (basic and acidic residues) spans 36-56 (PSKEEIEKECEDTSLRQETQR). The residue at position 37 (Ser-37) is a Phosphoserine. Over residues 58–71 (TSNHGHARKRAKSN) the composition is skewed to basic residues. The span at 109–143 (SDKEEEKSTKDVSEKEDKDKNKEKIPRKMLSRDSS) shows a compositional bias: basic and acidic residues. Ser-143 is modified (phosphoserine). In terms of domain architecture, R3H spans 169 to 232 (RMMLLKLEQE…AVIINKTSNT (64 aa)). The SUZ domain maps to 233-310 (RIPEQRFSEH…NREGLSRTSS (78 aa)). Residues 257-269 (LKRDDASMDRDDN) show a composition bias toward basic and acidic residues. 5 disordered regions span residues 257 to 376 (LKRD…ISRP), 401 to 457 (CTAQ…EAAD), 480 to 560 (ASTG…PGLQ), 661 to 725 (GTSP…PSMV), and 738 to 780 (RGQK…SLSS). Over residues 306–317 (SRTSSSRQSSTD) the composition is skewed to low complexity. Residues Ser-330, Ser-333, and Ser-349 each carry the phosphoserine modification. A compositionally biased stretch (low complexity) spans 401–415 (CTAQQQQQQQQQQLP). Polar residues-rich tracts occupy residues 441 to 453 (PFGQ…QGST) and 480 to 504 (ASTG…QQVL). A compositionally biased stretch (low complexity) spans 543–560 (SPQRGQQLPQPSQQPGLQ). The span at 682-691 (SPSPCSPPQM) shows a compositional bias: pro residues. Over residues 692–714 (PQQYSGVSPSGPGVVVMQLNVPN) the composition is skewed to low complexity. Residues 748–758 (PDSSPQANTQM) show a composition bias toward polar residues. A compositionally biased stretch (low complexity) spans 759–777 (SSSPVTSPTQSPAPSPVTS). A phosphoserine mark is found at Ser-853 and Ser-855. Phosphothreonine occurs at positions 856 and 860.

The protein localises to the nucleus. The polypeptide is R3H domain-containing protein 2 (R3HDM2) (Homo sapiens (Human)).